The chain runs to 972 residues: Translation initiation factor IF-2 (972 aa).

The segment covering 48 to 63 (DHLRKSHGATDGDKRK) has biased composition (basic and acidic residues). Disordered stretches follow at residues 48–85 (DHLR…KART) and 99–385 (RDDV…QAPT). Over residues 105 to 114 (GAEQGQAQVA) the composition is skewed to low complexity. The segment covering 121-181 (ELKRREEEAR…EEEAAAKRVA (61 aa)) has biased composition (basic and acidic residues). Residues 182–205 (AEAAAAQQQAAAQQAAAAEQQEAA) are compositionally biased toward low complexity. The segment covering 212-263 (DEARAAAERAAQREAAKKAEDAAREAADKARAEQEEISKRRAAAEAEARAIR) has biased composition (basic and acidic residues). Over residues 279–288 (PPKPVEPPKP) the composition is skewed to pro residues. Low complexity predominate over residues 313–328 (PAGAAAPATTAPAGAG). Residues 357–370 (SSGGVDRGWRGGPK) show a composition bias toward gly residues. The tr-type G domain maps to 472–641 (PRPPVVTVMG…LLQAEVLELK (170 aa)). The tract at residues 481–488 (GHVDHGKT) is G1. 481 to 488 (GHVDHGKT) contacts GTP. The segment at 506-510 (GITQH) is G2. Residues 527-530 (DTPG) are G3. GTP is bound by residues 527–531 (DTPGH) and 581–584 (NKID). Residues 581-584 (NKID) form a G4 region. Positions 617-619 (SAK) are G5.

Belongs to the TRAFAC class translation factor GTPase superfamily. Classic translation factor GTPase family. IF-2 subfamily.

The protein resides in the cytoplasm. Its function is as follows. One of the essential components for the initiation of protein synthesis. Protects formylmethionyl-tRNA from spontaneous hydrolysis and promotes its binding to the 30S ribosomal subunits. Also involved in the hydrolysis of GTP during the formation of the 70S ribosomal complex. The protein is Translation initiation factor IF-2 of Burkholderia lata (strain ATCC 17760 / DSM 23089 / LMG 22485 / NCIMB 9086 / R18194 / 383).